Here is a 216-residue protein sequence, read N- to C-terminus: Ribonuclease HII (216 aa).

An RNase H type-2 domain is found at 27–216 (ASLAGVDEAG…VKEHVKNCEG (190 aa)). A divalent metal cation is bound by residues aspartate 33, glutamate 34, and aspartate 125.

Belongs to the RNase HII family. Requires Mn(2+) as cofactor. Mg(2+) serves as cofactor.

It localises to the cytoplasm. The enzyme catalyses Endonucleolytic cleavage to 5'-phosphomonoester.. Endonuclease that specifically degrades the RNA of RNA-DNA hybrids. The sequence is that of Ribonuclease HII from Geotalea daltonii (strain DSM 22248 / JCM 15807 / FRC-32) (Geobacter daltonii).